We begin with the raw amino-acid sequence, 92 residues long: Small integral membrane protein 12 (92 aa).

A helical membrane pass occupies residues 12-34 (YAPYVTFPVAFVVGAVGYHLEWF).

It belongs to the SMIM12 family.

The protein localises to the membrane. The chain is Small integral membrane protein 12 (SMIM12) from Bos taurus (Bovine).